Here is a 449-residue protein sequence, read N- to C-terminus: Tubulin alpha chain (449 aa).

Positions 11, 71, 140, 144, 145, 179, 206, and 228 each coordinate GTP. Residue Glu-71 coordinates Mg(2+). Residue Glu-254 is part of the active site.

Belongs to the tubulin family. In terms of assembly, dimer of alpha and beta chains. A typical microtubule is a hollow water-filled tube with an outer diameter of 25 nm and an inner diameter of 15 nM. Alpha-beta heterodimers associate head-to-tail to form protofilaments running lengthwise along the microtubule wall with the beta-tubulin subunit facing the microtubule plus end conferring a structural polarity. Microtubules usually have 13 protofilaments but different protofilament numbers can be found in some organisms and specialized cells. It depends on Mg(2+) as a cofactor.

The protein localises to the cytoplasm. The protein resides in the cytoskeleton. It carries out the reaction GTP + H2O = GDP + phosphate + H(+). Its function is as follows. Tubulin is the major constituent of microtubules, a cylinder consisting of laterally associated linear protofilaments composed of alpha- and beta-tubulin heterodimers. Microtubules grow by the addition of GTP-tubulin dimers to the microtubule end, where a stabilizing cap forms. Below the cap, tubulin dimers are in GDP-bound state, owing to GTPase activity of alpha-tubulin. This Pneumocystis carinii protein is Tubulin alpha chain (TUB1).